The sequence spans 447 residues: Cysteine--tRNA ligase (447 aa).

Cys-28 contacts Zn(2+). Residues 30–40 carry the 'HIGH' region motif; it reads PTVYNYIHVGN. 3 residues coordinate Zn(2+): Cys-211, His-236, and Glu-240. A 'KMSKS' region motif is present at residues 268–272; sequence KMSKS. Lys-271 is a binding site for ATP.

This sequence belongs to the class-I aminoacyl-tRNA synthetase family. As to quaternary structure, monomer. Requires Zn(2+) as cofactor.

Its subcellular location is the cytoplasm. The catalysed reaction is tRNA(Cys) + L-cysteine + ATP = L-cysteinyl-tRNA(Cys) + AMP + diphosphate. This is Cysteine--tRNA ligase from Streptococcus pneumoniae serotype 4 (strain ATCC BAA-334 / TIGR4).